Here is a 291-residue protein sequence, read N- to C-terminus: Beta-lactamase CTX-M-15 (291 aa).

The signal sequence occupies residues 1–28 (MVKKSLRQFTLMATATVTLLLGSVPLYA). Catalysis depends on Ser73, which acts as the Nucleophile; acyl-ester intermediate. Residues Lys76, Ser133, Glu169, and Ser240 each contribute to the a beta-lactam site.

The protein belongs to the class-A beta-lactamase family. Monomer.

Its subcellular location is the secreted. The catalysed reaction is a beta-lactam + H2O = a substituted beta-amino acid. Inhibited by the beta-lactamase-blocking agents clavulanic acid and avibactam, via a covalent binding to Ser-73. Extended-spectrum beta-lactamase (ESBL) which confers resistance to penicillins, as well as first, second, third and fourth-generation cephalosporins. Has cefotaxime- and ceftazidime-hydrolyzing activity. Inactive against the carbapenem antibiotics, imipenem, meropenem and ertapenem. The polypeptide is Beta-lactamase CTX-M-15 (Escherichia coli O25b:H4).